We begin with the raw amino-acid sequence, 212 residues long: Thymidylate kinase (212 aa).

10–17 lines the ATP pocket; the sequence is GPDGSGKS.

It belongs to the thymidylate kinase family.

It carries out the reaction dTMP + ATP = dTDP + ADP. In terms of biological role, phosphorylation of dTMP to form dTDP in both de novo and salvage pathways of dTTP synthesis. In Exiguobacterium sp. (strain ATCC BAA-1283 / AT1b), this protein is Thymidylate kinase.